Consider the following 219-residue polypeptide: UPF0173 metal-dependent hydrolase Mlab_1154 (219 aa).

The protein belongs to the UPF0173 family.

This chain is UPF0173 metal-dependent hydrolase Mlab_1154, found in Methanocorpusculum labreanum (strain ATCC 43576 / DSM 4855 / Z).